The chain runs to 333 residues: MLVLGIESSCDETGVAVYDSESGLLSHALHSQIATHRVHGGVVPELASRDHVNYLVPLVDEVLTKAQIRKNQLDGIAYTAGPGLIGALLVGSCFAKSLAYALNIPALAIHHLEAHLLAAKMETPSLDFPFIALLVSGGHCQLIEVNNIGEYRLLGDTLDDAVGEAFDKTAKLMGIPYPGGAVLANLADQCLSTPYQFPRPMTDRPGLDFSFSGLKTHALNTWNQSEKKESDRSEIAKAFQQAVVETLIIKCKRAIKESQSKRLVVAGGVGANKALRSALQKWIKDIQGEVYFPALEYCTDNGAMVAYAGCLRMMRGEIDGGLGVIVKPRWPLA.

The Fe cation site is built by H111 and H115. Substrate is bound by residues L134–G138, D167, G180, and N272. Residue D300 coordinates Fe cation.

The protein belongs to the KAE1 / TsaD family. The cofactor is Fe(2+).

The protein resides in the cytoplasm. It carries out the reaction L-threonylcarbamoyladenylate + adenosine(37) in tRNA = N(6)-L-threonylcarbamoyladenosine(37) in tRNA + AMP + H(+). In terms of biological role, required for the formation of a threonylcarbamoyl group on adenosine at position 37 (t(6)A37) in tRNAs that read codons beginning with adenine. Is involved in the transfer of the threonylcarbamoyl moiety of threonylcarbamoyl-AMP (TC-AMP) to the N6 group of A37, together with TsaE and TsaB. TsaD likely plays a direct catalytic role in this reaction. The chain is tRNA N6-adenosine threonylcarbamoyltransferase from Legionella pneumophila subsp. pneumophila (strain Philadelphia 1 / ATCC 33152 / DSM 7513).